A 131-amino-acid polypeptide reads, in one-letter code: Large ribosomal subunit protein bL19c (131 aa).

The protein belongs to the bacterial ribosomal protein bL19 family.

Its subcellular location is the plastid. The protein resides in the cyanelle. Its function is as follows. This protein is located at the 30S-50S ribosomal subunit interface and may play a role in the structure and function of the aminoacyl-tRNA binding site. In Cyanophora paradoxa, this protein is Large ribosomal subunit protein bL19c (rpl19).